A 381-amino-acid chain; its full sequence is Queuine tRNA-ribosyltransferase (381 aa).

D96 functions as the Proton acceptor in the catalytic mechanism. Residues 96–100, D150, Q193, and G220 each bind substrate; that span reads DSGGF. The segment at 251-257 is RNA binding; that stretch reads GVGSPDS. D270 acts as the Nucleophile in catalysis. The interval 275 to 279 is RNA binding; important for wobble base 34 recognition; the sequence is TRIAR. Residues C308, C310, C313, and H339 each coordinate Zn(2+).

It belongs to the queuine tRNA-ribosyltransferase family. In terms of assembly, homodimer. Within each dimer, one monomer is responsible for RNA recognition and catalysis, while the other monomer binds to the replacement base PreQ1. Zn(2+) serves as cofactor.

It carries out the reaction 7-aminomethyl-7-carbaguanine + guanosine(34) in tRNA = 7-aminomethyl-7-carbaguanosine(34) in tRNA + guanine. It participates in tRNA modification; tRNA-queuosine biosynthesis. Catalyzes the base-exchange of a guanine (G) residue with the queuine precursor 7-aminomethyl-7-deazaguanine (PreQ1) at position 34 (anticodon wobble position) in tRNAs with GU(N) anticodons (tRNA-Asp, -Asn, -His and -Tyr). Catalysis occurs through a double-displacement mechanism. The nucleophile active site attacks the C1' of nucleotide 34 to detach the guanine base from the RNA, forming a covalent enzyme-RNA intermediate. The proton acceptor active site deprotonates the incoming PreQ1, allowing a nucleophilic attack on the C1' of the ribose to form the product. After dissociation, two additional enzymatic reactions on the tRNA convert PreQ1 to queuine (Q), resulting in the hypermodified nucleoside queuosine (7-(((4,5-cis-dihydroxy-2-cyclopenten-1-yl)amino)methyl)-7-deazaguanosine). This Bacillus licheniformis (strain ATCC 14580 / DSM 13 / JCM 2505 / CCUG 7422 / NBRC 12200 / NCIMB 9375 / NCTC 10341 / NRRL NRS-1264 / Gibson 46) protein is Queuine tRNA-ribosyltransferase.